A 1504-amino-acid chain; its full sequence is DNA polymerase zeta catalytic subunit (1504 aa).

Zn(2+) contacts are provided by cysteine 1398, cysteine 1401, cysteine 1414, and cysteine 1417. The CysA-type zinc finger occupies 1398–1417 (CCNCGEELTKICSLQLCDDC). [4Fe-4S] cluster-binding residues include cysteine 1446, cysteine 1449, cysteine 1468, and cysteine 1473. The CysB motif motif lies at 1446–1473 (CRTCSYRYTSDAGIENDHIASKCNSYDC).

It belongs to the DNA polymerase type-B family. In terms of assembly, forms DNA polymerase zeta with REV7. It depends on [4Fe-4S] cluster as a cofactor.

The protein localises to the mitochondrion. The protein resides in the nucleus. It carries out the reaction DNA(n) + a 2'-deoxyribonucleoside 5'-triphosphate = DNA(n+1) + diphosphate. Its function is as follows. Nonessential DNA polymerase. Required for DNA damage induced mutagenesis. Involved in DNA repair, mitochondrial DNA repair and translesion synthesis. Translesion synthesis in S.cerevisiae may use a specialized DNA polymerase that is not required for other DNA replicative processes. Has a role in the bypass of abasic (AP) sites. Highly inefficient in incorporating nucleotides opposite the AP site, but efficiently extends from nucleotides, particularly an A, inserted opposite the lesion. This Saccharomyces cerevisiae (strain ATCC 204508 / S288c) (Baker's yeast) protein is DNA polymerase zeta catalytic subunit (REV3).